Reading from the N-terminus, the 807-residue chain is Serine/threonine-protein kinase B-raf (807 aa).

Composition is skewed to low complexity over residues 1–15 and 110–128; these read MAAL…GASL and SVSS…SSSL. 2 disordered regions span residues 1–36 and 104–128; these read MAAL…YAGS and GNGT…SSSL. The region spanning 155-227 is the RBD domain; it reads PIVRVFLPNK…TGEELHVEVL (73 aa). The segment at 234 to 280 adopts a Phorbol-ester/DAG-type zinc-finger fold; it reads THNFVRKTFFTLAFCDFCRKLLFQGFRCQTCGYKFHQRCSTEVPLMC. Residues His-235, Cys-248, Cys-251, Cys-261, Cys-264, His-269, Cys-272, and Cys-280 each coordinate Zn(2+). The span at 303-313 shows a compositional bias: polar residues; sequence EETTLGETTPA. Disordered stretches follow at residues 303-372 and 434-494; these read EETT…VHIN and STAG…EIPD. The segment covering 314–328 has biased composition (low complexity); the sequence is SGSYPSVPPSDSVGP. Basic and acidic residues-rich tracts occupy residues 348–363 and 463–487; these read PADE…RDRS and QRER…RDSS. Residues 497-757 form the Protein kinase domain; it reads ITVGQRIGSG…PQILASIELL (261 aa). Residues 503-511 and Lys-523 contribute to the ATP site; that span reads IGSGSFGTV. The active-site Proton acceptor is Asp-616. The residue at position 790 (Ser-790) is a Phosphoserine; by MAPK1. A Phosphothreonine; by MAPK1 modification is found at Thr-793.

This sequence belongs to the protein kinase superfamily. TKL Ser/Thr protein kinase family. RAF subfamily. Requires Zn(2+) as cofactor. Post-translationally, phosphorylated. In terms of tissue distribution, expressed preferentially in neural tissue.

It is found in the nucleus. It localises to the cytoplasm. The protein resides in the cell membrane. It carries out the reaction L-seryl-[protein] + ATP = O-phospho-L-seryl-[protein] + ADP + H(+). The enzyme catalyses L-threonyl-[protein] + ATP = O-phospho-L-threonyl-[protein] + ADP + H(+). Its activity is regulated as follows. In quiescent cells, maintained in an inactive state via an intramolecular interaction between the protein kinase and N-terminal domains. Following mitogen-mediated cell activation, binds via its RGB domain to active HRAS (GTP-bound) which releases the inhibitory intramolecular interaction between the two domains. This allows the MAP2K1-mediated dimerization of KSR1 or KSR2, and BRAF which activates BRAF. Functionally, protein kinase involved in the activation of the MAP signaling cascade. May play a role in transducing specific signals in neural cells. This Coturnix japonica (Japanese quail) protein is Serine/threonine-protein kinase B-raf.